Consider the following 205-residue polypeptide: Delta-aminolevulinic acid dehydratase (205 aa).

Positions 117, 119, and 127 each coordinate Zn(2+). Lys-192 acts as the Schiff-base intermediate with substrate in catalysis. Arg-202 is a substrate binding site.

It belongs to the ALAD family. In terms of assembly, homooctamer. The cofactor is Zn(2+).

The enzyme catalyses 2 5-aminolevulinate = porphobilinogen + 2 H2O + H(+). The protein operates within porphyrin-containing compound metabolism; protoporphyrin-IX biosynthesis; coproporphyrinogen-III from 5-aminolevulinate: step 1/4. In terms of biological role, catalyzes an early step in the biosynthesis of tetrapyrroles. Binds two molecules of 5-aminolevulinate per subunit, each at a distinct site, and catalyzes their condensation to form porphobilinogen. This chain is Delta-aminolevulinic acid dehydratase (hemB), found in Ruminiclostridium josui (Clostridium josui).